The primary structure comprises 276 residues: Undecaprenyl-diphosphatase (276 aa).

Helical transmembrane passes span 40–60 (GLAF…TFFW), 98–118 (WLII…KDAI), 121–141 (IFRG…VLYY), 155–175 (MSFK…FPGI), 200–220 (FLLS…DIAT), 227–247 (VLLA…KLLM), and 255–275 (LDIF…LSVV).

Belongs to the UppP family.

The protein localises to the cell membrane. The enzyme catalyses di-trans,octa-cis-undecaprenyl diphosphate + H2O = di-trans,octa-cis-undecaprenyl phosphate + phosphate + H(+). In terms of biological role, catalyzes the dephosphorylation of undecaprenyl diphosphate (UPP). The protein is Undecaprenyl-diphosphatase of Methanosphaera stadtmanae (strain ATCC 43021 / DSM 3091 / JCM 11832 / MCB-3).